Consider the following 538-residue polypeptide: SWM histone demethylase complex subunit phf2 (538 aa).

Disordered regions lie at residues 28 to 47 (RFPN…NQNG), 98 to 150 (EIES…SSPL), and 198 to 222 (TKSG…RRRG). Basic and acidic residues predominate over residues 98–111 (EIESSKNQETDAKS). The PHD-type zinc finger occupies 232 to 288 (AMKCSVCQRLQSPPKNRIVFCDGCNTPFHQLCHEPYISDELLDSPNGEWFCDDCIRR). Positions 367–392 (GDQYLSLNNGTESQSKTTKHSTSLPS) are enriched in polar residues. The disordered stretch occupies residues 367–396 (GDQYLSLNNGTESQSKTTKHSTSLPSTEPV).

In terms of assembly, component of the SWM histone demethylase complex composed of at least lsd1, lsd2, phf1 and phf2.

The protein localises to the nucleus. In terms of biological role, component of the SWM histone demethylase complex that specifically demethylates H3K9me2, a specific tag for epigenetic transcriptional activation, thereby acting as a corepressor. Has a role in regulating heterochromatin propagation and euchromatic transcription. In Schizosaccharomyces pombe (strain 972 / ATCC 24843) (Fission yeast), this protein is SWM histone demethylase complex subunit phf2 (phf2).